Reading from the N-terminus, the 261-residue chain is Probable cyclic nucleotide phosphodiesterase PSM_A2567 (261 aa).

Fe cation is bound by residues Asp-22, His-24, Asp-62, Asn-94, His-160, His-198, and His-200. Residues His-24, Asp-62, and 94 to 95 (NH) contribute to the AMP site. His-200 provides a ligand contact to AMP.

The protein belongs to the cyclic nucleotide phosphodiesterase class-III family. The cofactor is Fe(2+).

This is Probable cyclic nucleotide phosphodiesterase PSM_A2567 from Pseudoalteromonas sp. (strain SM9913).